The primary structure comprises 787 residues: Vacuolar protein sorting-associated protein 35A (787 aa).

Position 1 is an N-acetylmethionine (Met1).

It belongs to the VPS35 family. As to quaternary structure, component of the retromer complex which consists of VPS29 (MAG1), VPS26 (VPS26A or VPS26B), VPS35 (VPS35A or VPS35B or VPS35C), VPS5/17 (SNX1 or SNX2A or SNX2B). Component of a retromer subcomplex consisting of VPS29 (MAG1), VPS26 (VPS26A or VPS26B), VPS35 (VPS35A or VPS35B or VPS35C). Interacts with RABG3F.

It localises to the cytoplasm. Its subcellular location is the endosome membrane. The protein localises to the prevacuolar compartment membrane. The protein resides in the golgi apparatus. It is found in the trans-Golgi network membrane. Functionally, plays a role in vesicular protein sorting. Component of the membrane-associated retromer complex which is essential in endosome-to-Golgi retrograde transport. Also involved in the efficient sorting of seed storage proteins. Binds alone to endosomal membranes and is required for recruitment of VPS26 and VPS29 to membrane. The VPS29-VPS26-VPS35 subcomplex may be involved in recycling of specific cargos from endosome to the plasma membrane. This chain is Vacuolar protein sorting-associated protein 35A (VPS35A), found in Arabidopsis thaliana (Mouse-ear cress).